The following is a 308-amino-acid chain: Tetraacyldisaccharide 4'-kinase (308 aa).

63-70 (SFGGNGKT) provides a ligand contact to ATP.

Belongs to the LpxK family.

The catalysed reaction is a lipid A disaccharide + ATP = a lipid IVA + ADP + H(+). It participates in glycolipid biosynthesis; lipid IV(A) biosynthesis; lipid IV(A) from (3R)-3-hydroxytetradecanoyl-[acyl-carrier-protein] and UDP-N-acetyl-alpha-D-glucosamine: step 6/6. Its function is as follows. Transfers the gamma-phosphate of ATP to the 4'-position of a tetraacyldisaccharide 1-phosphate intermediate (termed DS-1-P) to form tetraacyldisaccharide 1,4'-bis-phosphate (lipid IVA). The sequence is that of Tetraacyldisaccharide 4'-kinase from Campylobacter jejuni (strain RM1221).